A 506-amino-acid chain; its full sequence is L-amino-acid oxidase (506 aa).

An N-terminal signal peptide occupies residues 1–18 (MNVFFTFSLLFLAALGSC). A disulfide bridge connects residues C28 and C191. A Zn(2+)-binding site is contributed by E36. FAD is bound by residues 61 to 62 (MS), S62, 81 to 82 (EA), R89, and 105 to 108 (GPMR). Substrate is bound at residue R108. Zn(2+) contacts are provided by E111, E118, and E150. The N-linked (GlcNAc...) asparagine glycan is linked to N190. D219 is a binding site for Zn(2+). Residue H241 coordinates substrate. E248 contacts Zn(2+). Residue V279 coordinates FAD. 2 residues coordinate Zn(2+): E299 and H332. An intrachain disulfide couples C349 to C430. Y390 serves as a coordination point for substrate. H458 is a Zn(2+) binding site. Residues E475 and 482 to 487 (GWIDST) contribute to the FAD site. Substrate is bound at residue 482-483 (GW).

It belongs to the flavin monoamine oxidase family. FIG1 subfamily. As to quaternary structure, homodimer; non-covalently linked. Stabilized by a single zinc-binding site located at the dimer interface (Asp-219, His-332 and His-458). Other zinc-bind sites can be understood as transient and non-specific, and appear due to the high concentration of zinc ions used in the crystallization experiments. Requires FAD as cofactor. In terms of tissue distribution, expressed by the venom gland.

The protein localises to the secreted. The catalysed reaction is an L-alpha-amino acid + O2 + H2O = a 2-oxocarboxylate + H2O2 + NH4(+). The enzyme catalyses L-leucine + O2 + H2O = 4-methyl-2-oxopentanoate + H2O2 + NH4(+). It carries out the reaction L-phenylalanine + O2 + H2O = 3-phenylpyruvate + H2O2 + NH4(+). It catalyses the reaction L-tryptophan + O2 + H2O = indole-3-pyruvate + H2O2 + NH4(+). The catalysed reaction is L-methionine + O2 + H2O = 4-methylsulfanyl-2-oxobutanoate + H2O2 + NH4(+). The enzyme catalyses L-isoleucine + O2 + H2O = (S)-3-methyl-2-oxopentanoate + H2O2 + NH4(+). It carries out the reaction L-tyrosine + O2 + H2O = 3-(4-hydroxyphenyl)pyruvate + H2O2 + NH4(+). In terms of biological role, catalyzes an oxidative deamination of predominantly hydrophobic and aromatic L-amino acids, thus producing hydrogen peroxide that may contribute to the diverse toxic effects of this enzyme. Shows high catalytic activity against L-Met, L-Leu, L-Phe, L-Trp, L-Tyr, L-Ile. Shows no or weak activity on L-Cys, L-Val, L-Gln, L-Thr, L-Ser, L-Lys, L-Arg, L-Asn, L-Glu, L-Gly, L-Pro, L-Asp and L-His. Induces platelet aggregation in platelet-rich plasma, probably due to hydrogen peroxide production, since catalase inhibits aggregation effect. Induces moderate mouse paw edema. Induces apoptosis and shows cytotoxicity against several cancer cell lines, which is inhibited by catalase. Shows hemolytic activity and antibacterial activities against both Gram-positive and Gram-negative bacteria. Has parasiticidal activities against both trypanosomes and leishmania, as a result of enzyme-catalyzed hydrogen peroxide production. Unlike other snake venom L-amino acid oxidases, does not induce hemorrhage (with 50 ug of enzyme). This is L-amino-acid oxidase from Bothrops atrox (Barba amarilla).